The chain runs to 288 residues: F420-non-reducing hydrogenase vhu subunit G (288 aa).

This sequence belongs to the [NiFe]/[NiFeSe] hydrogenase small subunit family. As to quaternary structure, the F420-non-reducing hydrogenase vhu is composed of four subunits; VhuA, VhuD, VhuG and VhuU.

This chain is F420-non-reducing hydrogenase vhu subunit G (vhuG), found in Methanocaldococcus jannaschii (strain ATCC 43067 / DSM 2661 / JAL-1 / JCM 10045 / NBRC 100440) (Methanococcus jannaschii).